Consider the following 449-residue polypeptide: Pectate lyase L (449 aa).

Positions methionine 1–serine 26 are cleaved as a signal peptide. Cysteine 27 carries the N-palmitoyl cysteine lipid modification. A lipid anchor (S-diacylglycerol cysteine) is attached at cysteine 27. PbH1 repeat units follow at residues glycine 158–glycine 179, glycine 180–arginine 202, proline 213–leucine 242, glycine 245–serine 267, isoleucine 274–glycine 308, proline 336–lysine 358, and glycine 359–asparagine 391. Ca(2+) is bound by residues aspartate 236, aspartate 260, aspartate 261, and aspartate 264. Lysine 305 (proton acceptor) is an active-site residue.

This sequence belongs to the polysaccharide lyase 9 family. It depends on Ca(2+) as a cofactor.

The protein resides in the secreted. The enzyme catalyses Eliminative cleavage of (1-&gt;4)-alpha-D-galacturonan to give oligosaccharides with 4-deoxy-alpha-D-galact-4-enuronosyl groups at their non-reducing ends.. With respect to regulation, activated in presence of the surfactant polysorbate 20, while inhibited in the presence of polysorbate 40, polysorbate 60, polysorbate 80, Triton X-100 and sodium dodecyl sulfate. Inhibited by the metal chelator ethylenediaminetetraacetic acid (EDTA). Inhibited by iron and cobalt ions. Functionally, presents an endo-cleaving activity on the homogalacturonan (HG) region in pectin with a preference for low- or unmethylated pectin. This is Pectate lyase L from Paenibacillus polymyxa (strain SC2) (Bacillus polymyxa).